We begin with the raw amino-acid sequence, 263 residues long: HTH-type transcriptional repressor NanR (263 aa).

The tract at residues 1–23 (MSPMNAFDPQAEDSTTTIGRNLR) is disordered. Residues 30 to 98 (KKLSEMVEEE…NGERARVSRP (69 aa)) form the HTH gntR-type domain. The H-T-H motif DNA-binding region spans 58 to 77 (ERELMAFFNVGRPSVREALA).

Belongs to the NanR family.

Functionally, transcriptional repressor that controls expression of the genes required for the catabolism of sialic acids. In Escherichia coli O45:K1 (strain S88 / ExPEC), this protein is HTH-type transcriptional repressor NanR.